A 292-amino-acid chain; its full sequence is Seed lectin (292 aa).

The N-terminal stretch at 1–37 is a signal peptide; that stretch reads MATSNSRPHLLQTHKPFSVVLAISITFFLLLLNKVNS. 2 N-linked (GlcNAc...) asparagine glycosylation sites follow: N82 and N154. Mn(2+) contacts are provided by D163 and D165. D165, H167, N169, and D172 together coordinate Ca(2+). Mn(2+) contacts are provided by D172 and H177. The N-linked (GlcNAc...) asparagine glycan is linked to N186.

It belongs to the leguminous lectin family.

Mannose/glucose-specific lectin. The sequence is that of Seed lectin from Styphnolobium japonicum (Japanese pagoda tree).